The primary structure comprises 690 residues: NF-kappa-B-repressing factor (690 aa).

The segment at 1 to 296 (MEKILHMAEG…FKHIIGEDLV (296 aa)) is active repression domain. Positions 25-45 (KPSKGQKRYLSTYDGQNPPKK) match the Nuclear localization signal motif. 3 disordered regions span residues 27 to 49 (SKGQ…QAGS), 65 to 85 (SSSK…DVNG), and 133 to 160 (YFDS…PPSQ). Lys-68 participates in a covalent cross-link: Glycyl lysine isopeptide (Lys-Gly) (interchain with G-Cter in SUMO2). Residues 139–150 (PAPSSTSQQANC) show a composition bias toward polar residues. The DNA-binding element occupies 296–388 (VVCQIGMLSY…RVFLQDHCLA (93 aa)). Over residues 414-425 (PTYPSVKSSQCH) the composition is skewed to polar residues. The tract at residues 414 to 436 (PTYPSVKSSQCHSGSSPKGSGKK) is disordered. A Glycyl lysine isopeptide (Lys-Gly) (interchain with G-Cter in SUMO2) cross-link involves residue Lys-500. The G-patch domain maps to 551-596 (EDNIGNQLLRKMGWTGGGLGKSGEGIREPISVKEQHKREGLGLDVE). The region spanning 600 to 664 (KIAKRDIEQI…DRYLVVGRKR (65 aa)) is the R3H domain. Ser-618 is subject to Phosphoserine. Glycyl lysine isopeptide (Lys-Gly) (interchain with G-Cter in SUMO2) cross-links involve residues Lys-666 and Lys-674.

As to quaternary structure, interacts with NF-kappa-B. Interacts with XRN2. Interacts (via G-patch domain) with DHX15; promoting the RNA helicase activity of DHX15.

Its subcellular location is the nucleus. It localises to the nucleolus. Its function is as follows. Enhances the ATPase activity of DHX15 by acting like a brace that tethers mobile sections of DHX15 together, stabilizing a functional conformation with high RNA affinity of DHX15. Involved in the constitutive silencing of the interferon beta promoter, independently of the virus-induced signals, and in the inhibition of the basal and cytokine-induced iNOS promoter activity. Also involved in the regulation of IL-8 transcription. May also act as a DNA-binding transcription regulator: interacts with a specific negative regulatory element (NRE) 5'-AATTCCTCTGA-3' to mediate transcriptional repression of certain NK-kappa-B responsive genes. This Mus musculus (Mouse) protein is NF-kappa-B-repressing factor (Nkrf).